We begin with the raw amino-acid sequence, 189 residues long: Methylated-DNA--protein-cysteine methyltransferase (189 aa).

DNA contacts are provided by tyrosine 128 and arginine 142. Catalysis depends on cysteine 159, which acts as the Nucleophile; methyl group acceptor. Residue serine 165 participates in DNA binding.

The protein belongs to the MGMT family.

The protein localises to the nucleus. The catalysed reaction is a 6-O-methyl-2'-deoxyguanosine in DNA + L-cysteinyl-[protein] = S-methyl-L-cysteinyl-[protein] + a 2'-deoxyguanosine in DNA. It catalyses the reaction a 4-O-methyl-thymidine in DNA + L-cysteinyl-[protein] = a thymidine in DNA + S-methyl-L-cysteinyl-[protein]. Involved in the cellular defense against the biological effects of O6-methylguanine (O6-MeG) and O4-methylthymine (O4-MeT) in DNA. Repairs the methylated nucleobase in DNA by stoichiometrically transferring the methyl group to a cysteine residue in the enzyme. This is a suicide reaction: the enzyme is irreversibly inactivated. The protein is Methylated-DNA--protein-cysteine methyltransferase (MGT1) of Kluyveromyces lactis (strain ATCC 8585 / CBS 2359 / DSM 70799 / NBRC 1267 / NRRL Y-1140 / WM37) (Yeast).